Reading from the N-terminus, the 122-residue chain is Large ribosomal subunit protein uL18 (122 aa).

Belongs to the universal ribosomal protein uL18 family. Part of the 50S ribosomal subunit; part of the 5S rRNA/L5/L18/L25 subcomplex. Contacts the 5S and 23S rRNAs.

In terms of biological role, this is one of the proteins that bind and probably mediate the attachment of the 5S RNA into the large ribosomal subunit, where it forms part of the central protuberance. The chain is Large ribosomal subunit protein uL18 from Kosmotoga olearia (strain ATCC BAA-1733 / DSM 21960 / TBF 19.5.1).